Here is an 890-residue protein sequence, read N- to C-terminus: UPF0182 protein SYNW1212 (890 aa).

A run of 8 helical transmembrane segments spans residues 21–41 (WLLQ…AIRW), 64–84 (LTLL…NGLI), 98–118 (WQVS…LVAV), 134–154 (AVVL…SIPL), 173–193 (FAAL…CLGN), 219–239 (RLLM…CWLS), 268–288 (LLTV…SLLL), and 295–315 (VLAV…WLIL).

Belongs to the UPF0182 family.

Its subcellular location is the cell membrane. The sequence is that of UPF0182 protein SYNW1212 from Parasynechococcus marenigrum (strain WH8102).